The following is a 263-amino-acid chain: PDZ domain-containing protein 9 (263 aa).

Residues 30–109 enclose the PDZ domain; sequence QTKLTVGSMG…GTILQIKVYR (80 aa).

This is PDZ domain-containing protein 9 (PDZD9) from Bos taurus (Bovine).